The primary structure comprises 377 residues: Endolytic peptidoglycan transglycosylase RlpA (377 aa).

The N-terminal stretch at 1–19 (MHKQLPVICVAAGIVLLAA) is a signal peptide. C20 carries the N-palmitoyl cysteine lipid modification. C20 carries the S-diacylglycerol cysteine lipid modification. A disordered region spans residues 196 to 277 (LPPRPDLSGG…PVSAPVTAPA (82 aa)). Composition is skewed to low complexity over residues 208 to 218 (SASSAPAQPQG) and 264 to 277 (PQTAPVSAPVTAPA). The 77-residue stretch at 300–376 (AAASGRFVVQ…AQLQSFIASA (77 aa)) folds into the SPOR domain.

The protein belongs to the RlpA family.

The protein resides in the cell membrane. Lytic transglycosylase with a strong preference for naked glycan strands that lack stem peptides. The polypeptide is Endolytic peptidoglycan transglycosylase RlpA (Salmonella typhi).